The sequence spans 417 residues: NADH-quinone oxidoreductase subunit D (417 aa).

The protein belongs to the complex I 49 kDa subunit family. As to quaternary structure, NDH-1 is composed of 14 different subunits. Subunits NuoB, C, D, E, F, and G constitute the peripheral sector of the complex.

It localises to the cell inner membrane. It catalyses the reaction a quinone + NADH + 5 H(+)(in) = a quinol + NAD(+) + 4 H(+)(out). In terms of biological role, NDH-1 shuttles electrons from NADH, via FMN and iron-sulfur (Fe-S) centers, to quinones in the respiratory chain. The immediate electron acceptor for the enzyme in this species is believed to be ubiquinone. Couples the redox reaction to proton translocation (for every two electrons transferred, four hydrogen ions are translocated across the cytoplasmic membrane), and thus conserves the redox energy in a proton gradient. The sequence is that of NADH-quinone oxidoreductase subunit D from Francisella tularensis subsp. novicida (strain U112).